Reading from the N-terminus, the 1235-residue chain is ATP-dependent helicase/nuclease subunit A (1235 aa).

Residues 12–482 form the UvrD-like helicase ATP-binding domain; the sequence is SLWTDDQWKA…IDLSQNFRSR (471 aa). 33-40 contacts ATP; the sequence is AAAGSGKT. Residues 509–800 form the UvrD-like helicase C-terminal domain; the sequence is AAELTLGASF…RMMTIHASKG (292 aa).

Belongs to the helicase family. AddA subfamily. Heterodimer of AddA and AddB/RexB. Mg(2+) is required as a cofactor.

The catalysed reaction is Couples ATP hydrolysis with the unwinding of duplex DNA by translocating in the 3'-5' direction.. The enzyme catalyses ATP + H2O = ADP + phosphate + H(+). In terms of biological role, the heterodimer acts as both an ATP-dependent DNA helicase and an ATP-dependent, dual-direction single-stranded exonuclease. Recognizes the chi site generating a DNA molecule suitable for the initiation of homologous recombination. The AddA nuclease domain is required for chi fragment generation; this subunit has the helicase and 3' -&gt; 5' nuclease activities. The sequence is that of ATP-dependent helicase/nuclease subunit A from Listeria monocytogenes serotype 4b (strain F2365).